Consider the following 223-residue polypeptide: Endonuclease V (223 aa).

D44 and D109 together coordinate Mg(2+).

The protein belongs to the endonuclease V family. The cofactor is Mg(2+).

It localises to the cytoplasm. It carries out the reaction Endonucleolytic cleavage at apurinic or apyrimidinic sites to products with a 5'-phosphate.. Its function is as follows. DNA repair enzyme involved in the repair of deaminated bases. Selectively cleaves double-stranded DNA at the second phosphodiester bond 3' to a deoxyinosine leaving behind the intact lesion on the nicked DNA. This is Endonuclease V from Methanothrix thermoacetophila (strain DSM 6194 / JCM 14653 / NBRC 101360 / PT) (Methanosaeta thermophila).